Consider the following 191-residue polypeptide: Glutathione-dependent formaldehyde-activating enzyme (191 aa).

The 148-residue stretch at 22–169 folds into the CENP-V/GFA domain; the sequence is FQGGTLECHC…LTELGLPPYD (148 aa). Zn(2+)-binding residues include cysteine 29, cysteine 31, cysteine 50, cysteine 52, cysteine 55, cysteine 97, and cysteine 100.

It belongs to the Gfa family. Requires Zn(2+) as cofactor.

The enzyme catalyses S-(hydroxymethyl)glutathione = glutathione + formaldehyde. Its pathway is one-carbon metabolism; formaldehyde degradation; formate from formaldehyde (glutathione route): step 1/3. Its function is as follows. Catalyzes the condensation of formaldehyde and glutathione to S-hydroxymethylglutathione. This chain is Glutathione-dependent formaldehyde-activating enzyme, found in Xanthomonas axonopodis pv. citri (strain 306).